Consider the following 286-residue polypeptide: Pyridoxal kinase PdxY (286 aa).

Residues Ser9 and 44-45 (MQ) contribute to the substrate site. Positions 111, 147, and 180 each coordinate ATP. Asp221 is a binding site for substrate.

This sequence belongs to the pyridoxine kinase family. PdxY subfamily. Homodimer. Requires Mg(2+) as cofactor.

It catalyses the reaction pyridoxal + ATP = pyridoxal 5'-phosphate + ADP + H(+). The protein operates within cofactor metabolism; pyridoxal 5'-phosphate salvage; pyridoxal 5'-phosphate from pyridoxal: step 1/1. Pyridoxal kinase involved in the salvage pathway of pyridoxal 5'-phosphate (PLP). Catalyzes the phosphorylation of pyridoxal to PLP. The protein is Pyridoxal kinase PdxY of Burkholderia orbicola (strain AU 1054).